Consider the following 104-residue polypeptide: Inner membrane protein YjcH (104 aa).

Over 1 to 24 (MNGTIYQRIEDNAHFRELVEKRQR) the chain is Cytoplasmic. A helical membrane pass occupies residues 25–47 (FATILSIIMLAVYIGFILLIAFA). Residues 48–61 (PGWLGTPLNPNTSV) lie on the Periplasmic side of the membrane. The helical transmembrane segment at 62 to 84 (TRGIPIGVGVIVISFVLTGIYIW) threads the bilayer. Over 85–104 (RANGEFDRLNNEVLHEVQAS) the chain is Cytoplasmic.

It is found in the cell inner membrane. The sequence is that of Inner membrane protein YjcH (yjcH) from Escherichia coli (strain K12).